Consider the following 1378-residue polypeptide: DNA-directed RNA polymerase subunit beta (1378 aa).

The protein belongs to the RNA polymerase beta chain family. In terms of assembly, the RNAP catalytic core consists of 2 alpha, 1 beta, 1 beta' and 1 omega subunit. When a sigma factor is associated with the core the holoenzyme is formed, which can initiate transcription.

It catalyses the reaction RNA(n) + a ribonucleoside 5'-triphosphate = RNA(n+1) + diphosphate. DNA-dependent RNA polymerase catalyzes the transcription of DNA into RNA using the four ribonucleoside triphosphates as substrates. The protein is DNA-directed RNA polymerase subunit beta of Agrobacterium fabrum (strain C58 / ATCC 33970) (Agrobacterium tumefaciens (strain C58)).